The primary structure comprises 507 residues: ATP synthase subunit alpha (507 aa).

170–177 (GDRKTGKT) lines the ATP pocket.

It belongs to the ATPase alpha/beta chains family. In terms of assembly, F-type ATPases have 2 components, CF(1) - the catalytic core - and CF(0) - the membrane proton channel. CF(1) has five subunits: alpha(3), beta(3), gamma(1), delta(1), epsilon(1). CF(0) has three main subunits: a(1), b(2) and c(9-12). The alpha and beta chains form an alternating ring which encloses part of the gamma chain. CF(1) is attached to CF(0) by a central stalk formed by the gamma and epsilon chains, while a peripheral stalk is formed by the delta and b chains.

The protein localises to the cell inner membrane. It carries out the reaction ATP + H2O + 4 H(+)(in) = ADP + phosphate + 5 H(+)(out). Produces ATP from ADP in the presence of a proton gradient across the membrane. The alpha chain is a regulatory subunit. This chain is ATP synthase subunit alpha, found in Anaplasma marginale (strain Florida).